Reading from the N-terminus, the 136-residue chain is DUF35 domain-containing scaffold protein (136 aa).

Residues Cys-25, Cys-38, and Cys-41 each coordinate Zn(2+).

Belongs to the scaffold protein DUF35 family. Interacts with acetoacetyl-CoA thiolase and HMG-CoA synthase (HMGCS) that catalyzes the first and second step in the mevalonate pathway, respectively.

Functionally, functions as a scaffold to connect the acetoacetyl-CoA thiolase and HMG-CoA synthase (HMGCS) dimers in the channeling thiolase/HMGCS complex, which allows for efficient coupling of the endergonic thiolase reaction with the exergonic HMGCS reaction. The protein is DUF35 domain-containing scaffold protein of Pyrococcus furiosus (strain ATCC 43587 / DSM 3638 / JCM 8422 / Vc1).